The primary structure comprises 116 residues: Large ribosomal subunit protein bL19 (116 aa).

Belongs to the bacterial ribosomal protein bL19 family.

This protein is located at the 30S-50S ribosomal subunit interface and may play a role in the structure and function of the aminoacyl-tRNA binding site. The sequence is that of Large ribosomal subunit protein bL19 from Flavobacterium psychrophilum (strain ATCC 49511 / DSM 21280 / CIP 103535 / JIP02/86).